Reading from the N-terminus, the 97-residue chain is Putative membrane protein insertion efficiency factor (97 aa).

It belongs to the UPF0161 family.

It is found in the cell membrane. Could be involved in insertion of integral membrane proteins into the membrane. This chain is Putative membrane protein insertion efficiency factor, found in Lactobacillus gasseri (strain ATCC 33323 / DSM 20243 / BCRC 14619 / CIP 102991 / JCM 1131 / KCTC 3163 / NCIMB 11718 / NCTC 13722 / AM63).